The chain runs to 882 residues: DNA mismatch repair protein MutS (882 aa).

Residue 626–633 participates in ATP binding; sequence GPNMAGKS.

It belongs to the DNA mismatch repair MutS family.

Its function is as follows. This protein is involved in the repair of mismatches in DNA. It is possible that it carries out the mismatch recognition step. This protein has a weak ATPase activity. The sequence is that of DNA mismatch repair protein MutS from Anaeromyxobacter sp. (strain Fw109-5).